We begin with the raw amino-acid sequence, 199 residues long: GTP-binding protein Di-Ras2 (199 aa).

GTP contacts are provided by residues 14-21, 33-39, 61-65, and 121-124; these read GAGGVGKS, RESYIPT, DTTGS, and NKCD. Serine 35 bears the Phosphoserine mark. Residues 36 to 44 carry the Effector region motif; it reads YIPTVEDTY. Serine 126 carries the phosphoserine modification. 152–153 serves as a coordination point for GTP; that stretch reads AK. A Cysteine methyl ester modification is found at cysteine 196. Cysteine 196 is lipidated: S-geranylgeranyl cysteine. Residues 197-199 constitute a propeptide, removed in mature form; the sequence is VIM.

This sequence belongs to the small GTPase superfamily. Di-Ras family. Ubiquitinated by the ECS(ASB11) complex via 'Lys-11'-linked ubiquitin chains, leading to its degradation by the proteasome.

It is found in the cell membrane. The enzyme catalyses GTP + H2O = GDP + phosphate + H(+). Its function is as follows. Displays low GTPase activity and exists predominantly in the GTP-bound form. The chain is GTP-binding protein Di-Ras2 (DIRAS2) from Pongo abelii (Sumatran orangutan).